Here is a 428-residue protein sequence, read N- to C-terminus: Dihydroorotase (428 aa).

The Zn(2+) site is built by histidine 56 and histidine 58. Substrate is bound by residues 58–60 (HLR) and asparagine 90. Zn(2+) is bound by residues aspartate 150, histidine 177, and histidine 230. Substrate is bound at residue asparagine 276. Aspartate 303 contacts Zn(2+). The active site involves aspartate 303. Position 307 (histidine 307) interacts with substrate.

This sequence belongs to the metallo-dependent hydrolases superfamily. DHOase family. Class I DHOase subfamily. Zn(2+) is required as a cofactor.

It catalyses the reaction (S)-dihydroorotate + H2O = N-carbamoyl-L-aspartate + H(+). Its pathway is pyrimidine metabolism; UMP biosynthesis via de novo pathway; (S)-dihydroorotate from bicarbonate: step 3/3. Functionally, catalyzes the reversible cyclization of carbamoyl aspartate to dihydroorotate. The chain is Dihydroorotase from Streptomyces coelicolor (strain ATCC BAA-471 / A3(2) / M145).